We begin with the raw amino-acid sequence, 598 residues long: Aspartate--tRNA(Asp/Asn) ligase (598 aa).

E177 lines the L-aspartate pocket. Residues 201-204 (QIFK) are aspartate. L-aspartate is bound by residues R223 and H451. Residue 223–225 (RDE) participates in ATP binding. Residue E485 participates in ATP binding. R492 contacts L-aspartate. Position 537–540 (537–540 (GVDR)) interacts with ATP.

This sequence belongs to the class-II aminoacyl-tRNA synthetase family. Type 1 subfamily. Homodimer.

The protein localises to the cytoplasm. The catalysed reaction is tRNA(Asx) + L-aspartate + ATP = L-aspartyl-tRNA(Asx) + AMP + diphosphate. In terms of biological role, aspartyl-tRNA synthetase with relaxed tRNA specificity since it is able to aspartylate not only its cognate tRNA(Asp) but also tRNA(Asn). Reaction proceeds in two steps: L-aspartate is first activated by ATP to form Asp-AMP and then transferred to the acceptor end of tRNA(Asp/Asn). The polypeptide is Aspartate--tRNA(Asp/Asn) ligase (Anaplasma phagocytophilum (strain HZ)).